The chain runs to 848 residues: ATP-dependent RNA helicase dbp10 (848 aa).

Residues 22–43 (DIATDNQKDKHENVGENVSDED) are disordered. Residues 69–97 (SNFQSMGLNQTLLRAIFKKGFKAPTPIQR) carry the Q motif motif. The 173-residue stretch at 100 to 272 (IPLLLEGRDV…KAGLQDPVLV (173 aa)) folds into the Helicase ATP-binding domain. Residue 113-120 (ARTGSGKT) coordinates ATP. The DEAD box motif lies at 220–223 (DEAD). The region spanning 330 to 480 (RKRALELALK…TSSKQVKTDS (151 aa)) is the Helicase C-terminal domain. Residues 610–650 (NKVKPKGIKSEVASDKITDSSPGNMSEASESELEEVFKNPK) are disordered. Residues 617–627 (IKSEVASDKIT) show a composition bias toward basic and acidic residues. Residues 628-637 (DSSPGNMSEA) show a composition bias toward polar residues. Phosphoserine occurs at positions 638, 733, and 736. The tract at residues 768 to 813 (ANDSPIRENKRYKHNKLQTPKPADKFRDNYHKQNKRNREAKERGIG) is disordered. The span at 789 to 812 (PADKFRDNYHKQNKRNREAKERGI) shows a compositional bias: basic and acidic residues.

The protein belongs to the DEAD box helicase family. DDX54/DBP10 subfamily.

Its subcellular location is the nucleus. The protein resides in the nucleolus. It catalyses the reaction ATP + H2O = ADP + phosphate + H(+). Functionally, ATP-binding RNA helicase involved in the biogenesis of 60S ribosomal subunits and is required for the normal formation of 25S and 5.8S rRNAs. This is ATP-dependent RNA helicase dbp10 (dbp10) from Schizosaccharomyces pombe (strain 972 / ATCC 24843) (Fission yeast).